The chain runs to 115 residues: Aspartate 1-decarboxylase (115 aa).

S25 acts as the Schiff-base intermediate with substrate; via pyruvic acid in catalysis. S25 is subject to Pyruvic acid (Ser). Substrate is bound at residue T57. Y58 (proton donor) is an active-site residue. Substrate is bound at residue 71–73 (GAA).

The protein belongs to the PanD family. As to quaternary structure, heterooctamer of four alpha and four beta subunits. Requires pyruvate as cofactor. In terms of processing, is synthesized initially as an inactive proenzyme, which is activated by self-cleavage at a specific serine bond to produce a beta-subunit with a hydroxyl group at its C-terminus and an alpha-subunit with a pyruvoyl group at its N-terminus.

Its subcellular location is the cytoplasm. It carries out the reaction L-aspartate + H(+) = beta-alanine + CO2. Its pathway is cofactor biosynthesis; (R)-pantothenate biosynthesis; beta-alanine from L-aspartate: step 1/1. Catalyzes the pyruvoyl-dependent decarboxylation of aspartate to produce beta-alanine. This Campylobacter curvus (strain 525.92) protein is Aspartate 1-decarboxylase.